Consider the following 464-residue polypeptide: ATP synthase subunit beta (464 aa).

ATP is bound at residue 153-160; that stretch reads GGAGVGKT.

Belongs to the ATPase alpha/beta chains family. As to quaternary structure, F-type ATPases have 2 components, CF(1) - the catalytic core - and CF(0) - the membrane proton channel. CF(1) has five subunits: alpha(3), beta(3), gamma(1), delta(1), epsilon(1). CF(0) has three main subunits: a(1), b(2) and c(9-12). The alpha and beta chains form an alternating ring which encloses part of the gamma chain. CF(1) is attached to CF(0) by a central stalk formed by the gamma and epsilon chains, while a peripheral stalk is formed by the delta and b chains.

The protein resides in the cell inner membrane. The catalysed reaction is ATP + H2O + 4 H(+)(in) = ADP + phosphate + 5 H(+)(out). Its function is as follows. Produces ATP from ADP in the presence of a proton gradient across the membrane. The catalytic sites are hosted primarily by the beta subunits. The sequence is that of ATP synthase subunit beta from Burkholderia orbicola (strain MC0-3).